Consider the following 1093-residue polypeptide: Carbamoyl phosphate synthase large chain (1093 aa).

The interval 1 to 412 (MPRRNDIRKI…SLMKALRSLE (412 aa)) is carboxyphosphate synthetic domain. Positions 139, 179, 185, 186, 218, 220, 225, 251, 252, 253, 295, and 309 each coordinate ATP. Positions 143 to 338 (KDAMTRIGLD…IAKIAAKLAV (196 aa)) constitute an ATP-grasp 1 domain. Mg(2+) contacts are provided by Q295, E309, and N311. The Mn(2+) site is built by Q295, E309, and N311. Positions 413–560 (TGKRVGAEVL…YSSYEEEDEA (148 aa)) are oligomerization domain. The tract at residues 561–952 (PQTDKRKVII…AFAKAQLSAG (392 aa)) is carbamoyl phosphate synthetic domain. An ATP-grasp 2 domain is found at 689–880 (GKLLEQLQIP…LAKIASRLMT (192 aa)). The ATP site is built by R725, H764, L766, E771, G796, I797, H798, S799, Q839, and E851. Mg(2+)-binding residues include Q839, E851, and N853. Mn(2+) is bound by residues Q839, E851, and N853. Positions 953 to 1093 (LILPSSGTVF…QLLHAGHAVK (141 aa)) constitute an MGS-like domain. Residues 953 to 1093 (LILPSSGTVF…QLLHAGHAVK (141 aa)) form an allosteric domain region.

It belongs to the CarB family. In terms of assembly, composed of two chains; the small (or glutamine) chain promotes the hydrolysis of glutamine to ammonia, which is used by the large (or ammonia) chain to synthesize carbamoyl phosphate. Tetramer of heterodimers (alpha,beta)4. Requires Mg(2+) as cofactor. It depends on Mn(2+) as a cofactor.

The catalysed reaction is hydrogencarbonate + L-glutamine + 2 ATP + H2O = carbamoyl phosphate + L-glutamate + 2 ADP + phosphate + 2 H(+). It catalyses the reaction hydrogencarbonate + NH4(+) + 2 ATP = carbamoyl phosphate + 2 ADP + phosphate + 2 H(+). Its pathway is amino-acid biosynthesis; L-arginine biosynthesis; carbamoyl phosphate from bicarbonate: step 1/1. The protein operates within pyrimidine metabolism; UMP biosynthesis via de novo pathway; (S)-dihydroorotate from bicarbonate: step 1/3. Functionally, large subunit of the glutamine-dependent carbamoyl phosphate synthetase (CPSase). CPSase catalyzes the formation of carbamoyl phosphate from the ammonia moiety of glutamine, carbonate, and phosphate donated by ATP, constituting the first step of 2 biosynthetic pathways, one leading to arginine and/or urea and the other to pyrimidine nucleotides. The large subunit (synthetase) binds the substrates ammonia (free or transferred from glutamine from the small subunit), hydrogencarbonate and ATP and carries out an ATP-coupled ligase reaction, activating hydrogencarbonate by forming carboxy phosphate which reacts with ammonia to form carbamoyl phosphate. This is Carbamoyl phosphate synthase large chain from Acidobacterium capsulatum (strain ATCC 51196 / DSM 11244 / BCRC 80197 / JCM 7670 / NBRC 15755 / NCIMB 13165 / 161).